Consider the following 237-residue polypeptide: LexA repressor (237 aa).

Positions 26–46 form a DNA-binding region, H-T-H motif; that stretch reads FDEMKDALDLRSKSGIHRLIT. Catalysis depends on for autocatalytic cleavage activity residues serine 158 and lysine 196.

This sequence belongs to the peptidase S24 family. As to quaternary structure, homodimer.

It catalyses the reaction Hydrolysis of Ala-|-Gly bond in repressor LexA.. Represses a number of genes involved in the response to DNA damage (SOS response), including recA and lexA. In the presence of single-stranded DNA, RecA interacts with LexA causing an autocatalytic cleavage which disrupts the DNA-binding part of LexA, leading to derepression of the SOS regulon and eventually DNA repair. This is LexA repressor from Rhodopseudomonas palustris (strain BisA53).